A 116-amino-acid chain; its full sequence is MRHRHGYRKLGRTSSHRAALLKNLSISLIEHGKIETTVEKAKELRSYVEKLITVAGKNDSNAHKAVFAALQSKEATKKLVNEIAPKYVERAGGYTRIIRTRIRRGDATTMAFIELV.

Belongs to the bacterial ribosomal protein bL17 family. As to quaternary structure, part of the 50S ribosomal subunit. Contacts protein L32.

The sequence is that of Large ribosomal subunit protein bL17 from Sulfurimonas denitrificans (strain ATCC 33889 / DSM 1251) (Thiomicrospira denitrificans (strain ATCC 33889 / DSM 1251)).